The following is a 224-amino-acid chain: Ornithine decarboxylase antizyme (224 aa).

This sequence belongs to the ODC antizyme family. As to quaternary structure, interacts with ODC and thereby sterically blocks ODC homodimerization.

Its function is as follows. Ornithine decarboxylase (ODC) antizyme protein that negatively regulates ODC activity and intracellular polyamine biosynthesis in response to increased intracellular polyamine levels. Binds to ODC monomers, inhibiting the assembly of the functional ODC homodimer, and targets the monomers for ubiquitin-independent proteolytic destruction by the 26S proteasome. The protein is Ornithine decarboxylase antizyme (spa1) of Schizosaccharomyces octosporus (Fission yeast).